A 1300-amino-acid polypeptide reads, in one-letter code: ATP-dependent RNA helicase HrpA (1300 aa).

The 164-residue stretch at 87–250 folds into the Helicase ATP-binding domain; it reads LEAIRDHQVV…FNNAPIIEVS (164 aa). An ATP-binding site is contributed by 100-107; the sequence is GETGSGKT. Positions 197 to 200 match the DEAH box motif; it reads DEAH. Residues 274–444 form the Helicase C-terminal domain; it reads QLQAIFDAVD…SVILQMTALG (171 aa).

It belongs to the DEAD box helicase family. DEAH subfamily.

The catalysed reaction is ATP + H2O = ADP + phosphate + H(+). Its function is as follows. Not yet known. In Escherichia coli (strain K12), this protein is ATP-dependent RNA helicase HrpA (hrpA).